Reading from the N-terminus, the 173-residue chain is Monothiol glutaredoxin-S14, chloroplastic (173 aa).

The N-terminal 63 residues, 1–63 (MALRSVKTPT…KLKPTKFRCS (63 aa)), are a transit peptide targeting the chloroplast. The 102-residue stretch at 72–173 (KDTLEKLVNS…QEEVEKAMCS (102 aa)) folds into the Glutaredoxin domain. Lys89 lines the glutathione pocket. Residues Cys97 and Phe99 each contribute to the [2Fe-2S] cluster site. Cys97 is subject to S-glutathionyl cysteine. Positions 97–100 (CGFS) are required for CAX1 activation. Residues Arg126 and Lys130 each contribute to the glutathione site. The interval 133–137 (SNWPT) is required for CAX1 activation. Glutathione is bound by residues Phe138 and 151-152 (CD).

Belongs to the glutaredoxin family. CGFS subfamily. As to quaternary structure, [2Fe-2S]-bridged holo-homodimer. Interacts with N-terminal part of CAX1 in yeast. Interacts in vitro with SUFE1, BOLA1, BOLA2 and BOLA4. Interacts in vivo only with SUFE1, BOLA1 and BOLA4. Interacts with SBP1. Highly expressed in leaves, at intermediate levels in stems and at lower levels in roots and flowers.

It is found in the plastid. It localises to the chloroplast. Its function is as follows. May only reduce GSH-thiol disulfides, but not protein disulfides (Potential). Probably involved in the regulation of the redox state of the BOLA proteins (Potential). May act as Fe-S cluster donors to Fe-S cluster-requiring proteins. May protect cells against protein oxidative damage. May regulate CAX cation transporters. The GRXS14-BOLA1 heterodimer binds a labile, oxygen sensitive Fe-S cluster. The sequence is that of Monothiol glutaredoxin-S14, chloroplastic from Arabidopsis thaliana (Mouse-ear cress).